Consider the following 194-residue polypeptide: Thioredoxin O1, mitochondrial (194 aa).

Residues 1–42 constitute a mitochondrion transit peptide; that stretch reads MKGNWSIVRKVLHRQFSTLRSSTPSSRLSTSIRPLVLAPNSI. S75 bears the Phosphoserine mark. The 106-residue stretch at 89-194 folds into the Thioredoxin domain; that stretch reads VKSEEEFINA…LKNLMEQLYK (106 aa). Residues C118 and C121 each act as nucleophile in the active site. A disulfide bond links C118 and C121.

It belongs to the thioredoxin family. Plant O-type subfamily.

It localises to the mitochondrion matrix. Thiol-disulfide oxidoreductase that may participate in various redox reactions. Possesses insulin disulfide bonds reducing activity. Reduced by thioredoxin reductases NTRA and NTRB. This is Thioredoxin O1, mitochondrial from Arabidopsis thaliana (Mouse-ear cress).